The chain runs to 835 residues: Serine/threonine-protein kinase TNNI3K (835 aa).

A lipid anchor (N-myristoyl glycine) is attached at glycine 2. Positions 21-50 (SESYAIIIERLEDNLQIKENEFQELRHIFG) form a coiled coil. ANK repeat units follow at residues 66–96 (RGLSLLHLCCVCGGNKSHIRALMLKGLRPSR), 100–129 (NGFPALHLAVYKDSPELITSLLHSGADVQQ), 133–162 (GGLTALHIAAIAGHPEAAEVLLQHGANVNV), 166–195 (VFFTPLHIAAYYGHEQVTSVLLKFGADVNV), 199–228 (VGDRPLHLASAKGFFNIVKLLVEEGSKADV), 234–263 (EDHVPLHFCSRFGHHNIVSYLLQSDLEVQP), 269–298 (YGDTPLHLACYNGNFEVAKEIVQVTGTESL), 304–335 (FSETAFHSACTYGKNIDLVKFLLDQNAVNINH), 339–368 (DGHTGLHSACYHGHIRLVQFLLDNGADMNL), and 381–410 (DEQTCLMWAYEKGHDAIVTLLKHYKRPQEE). The Protein kinase domain occupies 463–723 (IEFHEIIGSG…EVVSKLEECL (261 aa)). Residues 469–477 (IGSGSFGKV) and lysine 490 contribute to the ATP site. The active-site Proton acceptor is the aspartate 588.

This sequence belongs to the protein kinase superfamily. TKL Ser/Thr protein kinase family. MAP kinase kinase kinase subfamily. As to quaternary structure, interacts with TNNI3, ACTC, ACTA1, MYBPC3, AIP, FABP3 and HADHB. Mg(2+) serves as cofactor. In terms of processing, autophosphorylated.

It is found in the nucleus. Its subcellular location is the cytoplasm. The catalysed reaction is L-seryl-[protein] + ATP = O-phospho-L-seryl-[protein] + ADP + H(+). The enzyme catalyses L-threonyl-[protein] + ATP = O-phospho-L-threonyl-[protein] + ADP + H(+). May play a role in cardiac physiology. This chain is Serine/threonine-protein kinase TNNI3K, found in Rattus norvegicus (Rat).